A 418-amino-acid chain; its full sequence is Tyrosine--tRNA ligase (418 aa).

Tyrosine 34 serves as a coordination point for L-tyrosine. A 'HIGH' region motif is present at residues 39–48 (PTADSLHLGH). Residues tyrosine 169 and glutamine 173 each contribute to the L-tyrosine site. Residues 229–233 (KFGKS) carry the 'KMSKS' region motif. Lysine 232 contributes to the ATP binding site. The S4 RNA-binding domain maps to 352-418 (NNIVELLVSS…GKKKYFVLTY (67 aa)).

Belongs to the class-I aminoacyl-tRNA synthetase family. TyrS type 1 subfamily. In terms of assembly, homodimer.

The protein resides in the cytoplasm. The catalysed reaction is tRNA(Tyr) + L-tyrosine + ATP = L-tyrosyl-tRNA(Tyr) + AMP + diphosphate + H(+). Its function is as follows. Catalyzes the attachment of tyrosine to tRNA(Tyr) in a two-step reaction: tyrosine is first activated by ATP to form Tyr-AMP and then transferred to the acceptor end of tRNA(Tyr). This is Tyrosine--tRNA ligase from Streptococcus pneumoniae (strain ATCC BAA-255 / R6).